We begin with the raw amino-acid sequence, 149 residues long: Probable conjugal transfer protein TrbE part 1 (149 aa).

Belongs to the TrbE/VirB4 family.

The protein is Probable conjugal transfer protein TrbE part 1 (trbEA) of Sinorhizobium fredii (strain NBRC 101917 / NGR234).